Consider the following 173-residue polypeptide: Inorganic pyrophosphatase (173 aa).

Lys29, Arg43, and Tyr55 together coordinate substrate. Residues Asp65, Asp70, and Asp102 each coordinate Mg(2+). Tyr141 provides a ligand contact to substrate.

The protein belongs to the PPase family. As to quaternary structure, homohexamer. Mg(2+) is required as a cofactor.

Its subcellular location is the cytoplasm. The enzyme catalyses diphosphate + H2O = 2 phosphate + H(+). Functionally, catalyzes the hydrolysis of inorganic pyrophosphate (PPi) forming two phosphate ions. The sequence is that of Inorganic pyrophosphatase from Gluconobacter oxydans (strain 621H) (Gluconobacter suboxydans).